A 1681-amino-acid polypeptide reads, in one-letter code: Meiosis regulator and mRNA stability factor 1 (1681 aa).

Positions Ile-340–Ile-477 constitute an NYN domain. 2 disordered regions span residues Val-576 to Val-595 and Gln-638 to Phe-717. Positions Gln-638 to Ser-647 are enriched in polar residues. A compositionally biased stretch (basic and acidic residues) spans Gln-648–Asp-658. Polar residues predominate over residues Lys-659 to Ser-690. Residues Gln-692–Val-715 are compositionally biased toward basic and acidic residues. The RRM domain occupies Ala-779–Gly-858. HTH OST-type domains follow at residues Ser-863–Gly-937, Ser-991–Pro-1067, Gln-1087–Arg-1161, Gln-1163–Arg-1238, Arg-1247–Met-1321, Arg-1323–Lys-1398, Ser-1399–Leu-1472, and Ser-1474–Asp-1548. The segment covering Glu-1637 to Ser-1648 has biased composition (polar residues). Residues Glu-1637–Gln-1662 form a disordered region. A compositionally biased stretch (basic and acidic residues) spans Lys-1649–Val-1659.

The protein localises to the peroxisome. Its function is as follows. Essential regulator of oogenesis required for female meiotic progression to repress transposable elements and preventing their mobilization, which is essential for the germline integrity. This is Meiosis regulator and mRNA stability factor 1 from Xenopus tropicalis (Western clawed frog).